The following is a 141-amino-acid chain: Hemoglobin subunit alpha-1/2 (141 aa).

The region spanning 1 to 141 is the Globin domain; the sequence is VLSPADKKNV…VSTVLTSKYR (141 aa). Ser-3 carries the phosphoserine modification. Lys-7 and Lys-11 each carry N6-succinyllysine. Residue Lys-16 is modified to N6-acetyllysine; alternate. Lys-16 carries the post-translational modification N6-succinyllysine; alternate. At Tyr-24 the chain carries Phosphotyrosine. Residue Ser-35 is modified to Phosphoserine. Position 40 is an N6-succinyllysine (Lys-40). Residue Ser-49 is modified to Phosphoserine. Residue His-58 coordinates O2. Heme b is bound at residue His-87. Ser-102 carries the post-translational modification Phosphoserine. Thr-108 carries the post-translational modification Phosphothreonine. Phosphoserine occurs at positions 124 and 131. Thr-134 and Thr-137 each carry phosphothreonine. Ser-138 carries the post-translational modification Phosphoserine.

This sequence belongs to the globin family. In terms of assembly, heterotetramer of two alpha chains and two beta chains. As to expression, red blood cells.

Its function is as follows. Involved in oxygen transport from the lung to the various peripheral tissues. The chain is Hemoglobin subunit alpha-1/2 from Mandrillus sphinx (Mandrill).